Consider the following 837-residue polypeptide: Translation initiation factor IF-2 (837 aa).

Residues 94 to 253 (KRSPDEIEAE…QHGFQNPTGP (160 aa)) form a disordered region. Over residues 95 to 148 (RSPDEIEAERQRELEEQRAAEEAERLKAEEAAARQRAEEEARKAEEAARAKAAE) the composition is skewed to basic and acidic residues. Low complexity predominate over residues 149 to 171 (EAVSAQPAAAVEVAAAEPVAKPA). Basic and acidic residues-rich tracts occupy residues 172–188 (AAEERKKEEPRRVPKRD) and 220–229 (STDEESDGYR). The segment covering 230-244 (RGGRGGKSKLKKRNQ) has biased composition (basic residues). The 170-residue stretch at 337-506 (TRAPVVTVMG…LLQAEVLELK (170 aa)) folds into the tr-type G domain. The interval 346-353 (GHVDHGKT) is G1. Position 346 to 353 (346 to 353 (GHVDHGKT)) interacts with GTP. The G2 stretch occupies residues 371–375 (GITQH). Residues 392–395 (DTPG) form a G3 region. Residues 392-396 (DTPGH) and 446-449 (NKID) contribute to the GTP site. Residues 446 to 449 (NKID) are G4. Residues 482 to 484 (SAK) are G5.

The protein belongs to the TRAFAC class translation factor GTPase superfamily. Classic translation factor GTPase family. IF-2 subfamily.

It is found in the cytoplasm. Functionally, one of the essential components for the initiation of protein synthesis. Protects formylmethionyl-tRNA from spontaneous hydrolysis and promotes its binding to the 30S ribosomal subunits. Also involved in the hydrolysis of GTP during the formation of the 70S ribosomal complex. The chain is Translation initiation factor IF-2 from Pseudomonas paraeruginosa (strain DSM 24068 / PA7) (Pseudomonas aeruginosa (strain PA7)).